The chain runs to 387 residues: ATP-dependent Clp protease proteolytic subunit-related protein 1, chloroplastic (387 aa).

The transit peptide at 1–41 directs the protein to the chloroplast; that stretch reads MATALVSPLTSQLNHEAVCSKFVLPKSPFMSGSKLFSSNMP. Basic and acidic residues predominate over residues 355 to 365; the sequence is QDSSFEKRDYD. The disordered stretch occupies residues 355-387; that stretch reads QDSSFEKRDYDGTLAQRAMRPGGGSPAAPAGLR.

This sequence belongs to the peptidase S14 family. Component of the chloroplastic Clp protease core complex which consist of at least 16 proteins: CLPP4 (3 copies), CLPP5 (3 copies), CLPR4 (2 copies), ClpP1 (1 copy), CLPP6 (1 copy), CLPR2 (1 copy), CLPT1 (1 copy), CLPT2 (1 copy) and 3 copies of CLPP3 and/or CLPR1 and/or CLPR3. The core complex is organized in two heptameric rings, one containing CLPP3,4,5,6 in a 1:2:3:1 ratio and the other CLPP1 and CLPR1,2,3,4 in a 3:1:1:1:1 ratio.

Its subcellular location is the plastid. It localises to the chloroplast stroma. In terms of biological role, required for chloroplast development and differentiation. The polypeptide is ATP-dependent Clp protease proteolytic subunit-related protein 1, chloroplastic (Arabidopsis thaliana (Mouse-ear cress)).